The sequence spans 283 residues: Protease HtpX (283 aa).

2 consecutive transmembrane segments (helical) span residues 4–24 (IALF…ILSV) and 33–53 (GGIL…SLFM). Residue H139 participates in Zn(2+) binding. E140 is a catalytic residue. H143 lines the Zn(2+) pocket. Transmembrane regions (helical) follow at residues 147–167 (GDMV…IFLS) and 192–212 (FLVS…IAMW). Residue E218 coordinates Zn(2+).

It belongs to the peptidase M48B family. Zn(2+) serves as cofactor.

The protein resides in the cell inner membrane. This Glaesserella parasuis serovar 5 (strain SH0165) (Haemophilus parasuis) protein is Protease HtpX.